A 63-amino-acid chain; its full sequence is MSPYSILFVVVIALCLLPESIVGVCWDTGCQLNAWAVRGCAQYGMRDVNMKSCSGGIIYTCCD.

A signal peptide spans 1–23 (MSPYSILFVVVIALCLLPESIVG). Intrachain disulfides connect Cys15–Cys62, Cys25–Cys53, and Cys30–Cys61.

As to expression, hemolymph (at protein level). Also weakly expressed by the venom gland (at protein level).

The protein localises to the secreted. Toxin with insecticidal activity. High doses of recombinant toxin causes impaired motor behavior of D.melanogaster, which progress slowly to paralysis and death after several hours. This is Venom peptide U-reduvitoxin-Pp19 from Pristhesancus plagipennis (Common assassin bug).